A 445-amino-acid polypeptide reads, in one-letter code: Adenylosuccinate synthetase (445 aa).

GTP is bound by residues 24–30 (GDEGKGK) and 52–54 (GHT). The active-site Proton acceptor is D25. 2 residues coordinate Mg(2+): D25 and G52. IMP-binding positions include 25–28 (DEGK), 50–53 (NAGH), T147, R161, N238, T253, and R317. H53 acts as the Proton donor in catalysis. 313–319 (TTTGRRR) serves as a coordination point for substrate. GTP-binding positions include R319, 345 to 347 (KLD), and 427 to 429 (GVG).

This sequence belongs to the adenylosuccinate synthetase family. Homodimer. Mg(2+) serves as cofactor.

The protein resides in the cytoplasm. It catalyses the reaction IMP + L-aspartate + GTP = N(6)-(1,2-dicarboxyethyl)-AMP + GDP + phosphate + 2 H(+). The protein operates within purine metabolism; AMP biosynthesis via de novo pathway; AMP from IMP: step 1/2. Functionally, plays an important role in the de novo pathway and in the salvage pathway of purine nucleotide biosynthesis. Catalyzes the first committed step in the biosynthesis of AMP from IMP. The polypeptide is Adenylosuccinate synthetase (Malassezia globosa (strain ATCC MYA-4612 / CBS 7966) (Dandruff-associated fungus)).